Consider the following 457-residue polypeptide: Arginine biosynthesis bifunctional protein ArgJ, mitochondrial (457 aa).

Residues Thr184, Lys213, Thr224, Glu312, Asn452, and Thr457 each coordinate substrate. Residue Thr224 is the Nucleophile of the active site.

This sequence belongs to the ArgJ family. In terms of assembly, heterodimer of an alpha and a beta chain. Post-translationally, the alpha and beta chains are autoproteolytically processed from a single precursor protein within the mitochondrion.

The protein localises to the mitochondrion matrix. The catalysed reaction is N(2)-acetyl-L-ornithine + L-glutamate = N-acetyl-L-glutamate + L-ornithine. It carries out the reaction L-glutamate + acetyl-CoA = N-acetyl-L-glutamate + CoA + H(+). The protein operates within amino-acid biosynthesis; L-arginine biosynthesis; L-ornithine and N-acetyl-L-glutamate from L-glutamate and N(2)-acetyl-L-ornithine (cyclic): step 1/1. It functions in the pathway amino-acid biosynthesis; L-arginine biosynthesis; N(2)-acetyl-L-ornithine from L-glutamate: step 1/4. Its function is as follows. Catalyzes two activities which are involved in the cyclic version of arginine biosynthesis: the synthesis of acetylglutamate from glutamate and acetyl-CoA, and of ornithine by transacetylation between acetylornithine and glutamate. The sequence is that of Arginine biosynthesis bifunctional protein ArgJ, mitochondrial from Aspergillus terreus (strain NIH 2624 / FGSC A1156).